The sequence spans 89 residues: Small ribosomal subunit protein uS17 (89 aa).

The protein belongs to the universal ribosomal protein uS17 family. As to quaternary structure, part of the 30S ribosomal subunit.

Functionally, one of the primary rRNA binding proteins, it binds specifically to the 5'-end of 16S ribosomal RNA. In Polaromonas naphthalenivorans (strain CJ2), this protein is Small ribosomal subunit protein uS17.